Reading from the N-terminus, the 199-residue chain is Superoxide dismutase [Fe] (199 aa).

Fe cation contacts are provided by His28, His80, Asp162, and His166.

Belongs to the iron/manganese superoxide dismutase family. Homodimer. The cofactor is Fe cation.

Its subcellular location is the cytoplasm. It catalyses the reaction 2 superoxide + 2 H(+) = H2O2 + O2. In terms of biological role, destroys superoxide anion radicals which are normally produced within the cells and which are toxic to biological systems. The sequence is that of Superoxide dismutase [Fe] (sodB) from Leptolyngbya boryana (Plectonema boryanum).